The chain runs to 345 residues: Methionine import ATP-binding protein MetN (345 aa).

The 240-residue stretch at isoleucine 2–isoleucine 241 folds into the ABC transporter domain. Glycine 38–serine 45 provides a ligand contact to ATP.

The protein belongs to the ABC transporter superfamily. Methionine importer (TC 3.A.1.24) family. As to quaternary structure, the complex is composed of two ATP-binding proteins (MetN), two transmembrane proteins (MetI) and a solute-binding protein (MetQ).

It localises to the cell inner membrane. The enzyme catalyses L-methionine(out) + ATP + H2O = L-methionine(in) + ADP + phosphate + H(+). It catalyses the reaction D-methionine(out) + ATP + H2O = D-methionine(in) + ADP + phosphate + H(+). Functionally, part of the ABC transporter complex MetNIQ involved in methionine import. Responsible for energy coupling to the transport system. The chain is Methionine import ATP-binding protein MetN from Histophilus somni (strain 129Pt) (Haemophilus somnus).